Consider the following 105-residue polypeptide: Nucleoid-associated protein Lm4b_02677 (105 aa).

The segment covering 1-16 has biased composition (low complexity); sequence MRGMGNMQGMMKQMQK. The segment at 1-23 is disordered; it reads MRGMGNMQGMMKQMQKMQKEMAK.

Belongs to the YbaB/EbfC family. Homodimer.

It localises to the cytoplasm. The protein localises to the nucleoid. Binds to DNA and alters its conformation. May be involved in regulation of gene expression, nucleoid organization and DNA protection. This is Nucleoid-associated protein Lm4b_02677 from Listeria monocytogenes serotype 4b (strain CLIP80459).